A 371-amino-acid polypeptide reads, in one-letter code: Meiotic drive suppressor wtf18 (371 aa).

Helical transmembrane passes span F86–V106, A120–F140, V153–V173, D197–V217, C233–L253, L257–L277, A287–Y307, and F321–G341.

This sequence belongs to the WTF family. As to quaternary structure, homomer. Interacts with other proteins that exhibit high sequence similarity.

The protein localises to the spore membrane. Its subcellular location is the vacuole membrane. Its function is as follows. Acts as a suppressor component of the dual wtf meiotic drive system, and can suppress but not confer meiotic drive by compatible poisons. Wtf meiotic drive systems promote unequal transmission of alleles from the parental zygote to progeny spores by encoding a poison and an antidote from the same locus; the poison is trans-acting and forms toxic aggregates in all spores within an ascus, wherease the antidote is spore-specific and targets aggregates for degradation by the vacuole. Meiotic drive by wtf systems therefore lead to poisoning of all progeny that do not inherit the dual poison/antidote allele, or express a compatible antidote. The polypeptide is Meiotic drive suppressor wtf18 (Schizosaccharomyces kambucha (Fission yeast)).